The chain runs to 245 residues: 1-(5-phosphoribosyl)-5-[(5-phosphoribosylamino)methylideneamino] imidazole-4-carboxamide isomerase (245 aa).

The Proton acceptor role is filled by aspartate 8. Aspartate 131 acts as the Proton donor in catalysis.

Belongs to the HisA/HisF family.

The protein localises to the cytoplasm. The enzyme catalyses 1-(5-phospho-beta-D-ribosyl)-5-[(5-phospho-beta-D-ribosylamino)methylideneamino]imidazole-4-carboxamide = 5-[(5-phospho-1-deoxy-D-ribulos-1-ylimino)methylamino]-1-(5-phospho-beta-D-ribosyl)imidazole-4-carboxamide. Its pathway is amino-acid biosynthesis; L-histidine biosynthesis; L-histidine from 5-phospho-alpha-D-ribose 1-diphosphate: step 4/9. This is 1-(5-phosphoribosyl)-5-[(5-phosphoribosylamino)methylideneamino] imidazole-4-carboxamide isomerase from Neisseria gonorrhoeae (strain ATCC 700825 / FA 1090).